A 183-amino-acid polypeptide reads, in one-letter code: Intraflagellar transport protein 27 homolog (183 aa).

GTP contacts are provided by residues 12–19 (GAPTVGKT), 63–67 (DVSGQ), and 120–123 (NKSD).

This sequence belongs to the small GTPase superfamily. Rab family. Component of the IFT complex B.

It localises to the cell projection. The protein resides in the cilium. The protein localises to the flagellum. Functionally, small GTPase-like component of the intraflagellar transport (IFT) complex B required for both anterograde and retrograde intraflagellar transport. May be involved in cargo loading of the retrograde transport. In Trypanosoma brucei brucei (strain 927/4 GUTat10.1), this protein is Intraflagellar transport protein 27 homolog.